Reading from the N-terminus, the 182-residue chain is Ribulose bisphosphate carboxylase small subunit, chloroplastic 4 (182 aa).

Residues 1-41 (MAATMMNKTVVLSKGCTKPSAVPKVSINRKGFLNTAMNKKR) constitute a chloroplast transit peptide.

The protein belongs to the RuBisCO small chain family. As to quaternary structure, heterohexadecamer of 8 large and 8 small subunits.

It is found in the plastid. Its subcellular location is the chloroplast. In terms of biological role, ruBisCO catalyzes two reactions: the carboxylation of D-ribulose 1,5-bisphosphate, the primary event in carbon dioxide fixation, as well as the oxidative fragmentation of the pentose substrate. Both reactions occur simultaneously and in competition at the same active site. Although the small subunit is not catalytic it is essential for maximal activity. The protein is Ribulose bisphosphate carboxylase small subunit, chloroplastic 4 of Acetabularia peniculus (Green alga).